We begin with the raw amino-acid sequence, 91 residues long: uncharacterized protein (91 aa).

Positions 1–18 are cleaved as a signal peptide; it reads MKVNLILFSLFLLVSIMA. The N-palmitoyl cysteine moiety is linked to residue cysteine 19. A lipid anchor (S-diacylglycerol cysteine) is attached at cysteine 19.

Its subcellular location is the cell membrane. This is an uncharacterized protein from Escherichia coli (strain K12).